A 214-amino-acid polypeptide reads, in one-letter code: Holliday junction branch migration complex subunit RuvA (214 aa).

The interval 1–63 (MIASLSGTVE…EDALTLYGFA (63 aa)) is domain I. The interval 64–142 (DRDEREVFEV…PTGEPVPGAE (79 aa)) is domain II. The segment at 143 to 151 (AEASDEPAV) is flexible linker. The domain III stretch occupies residues 151–214 (VETVWHADVV…GMAGAVRGGR (64 aa)).

The protein belongs to the RuvA family. Homotetramer. Forms an RuvA(8)-RuvB(12)-Holliday junction (HJ) complex. HJ DNA is sandwiched between 2 RuvA tetramers; dsDNA enters through RuvA and exits via RuvB. An RuvB hexamer assembles on each DNA strand where it exits the tetramer. Each RuvB hexamer is contacted by two RuvA subunits (via domain III) on 2 adjacent RuvB subunits; this complex drives branch migration. In the full resolvosome a probable DNA-RuvA(4)-RuvB(12)-RuvC(2) complex forms which resolves the HJ.

Its subcellular location is the cytoplasm. The RuvA-RuvB-RuvC complex processes Holliday junction (HJ) DNA during genetic recombination and DNA repair, while the RuvA-RuvB complex plays an important role in the rescue of blocked DNA replication forks via replication fork reversal (RFR). RuvA specifically binds to HJ cruciform DNA, conferring on it an open structure. The RuvB hexamer acts as an ATP-dependent pump, pulling dsDNA into and through the RuvAB complex. HJ branch migration allows RuvC to scan DNA until it finds its consensus sequence, where it cleaves and resolves the cruciform DNA. The polypeptide is Holliday junction branch migration complex subunit RuvA (Micrococcus luteus (strain ATCC 4698 / DSM 20030 / JCM 1464 / CCM 169 / CCUG 5858 / IAM 1056 / NBRC 3333 / NCIMB 9278 / NCTC 2665 / VKM Ac-2230) (Micrococcus lysodeikticus)).